A 258-amino-acid chain; its full sequence is MNELKKPHILVCNDDGIEGEGIHVLAASMKKIGRVTVVAPAEPHSGMSHAMTLGVPLRIKEYQRNNRFFGYTVSGTPVDCIKVALSHILDDKPDILVSGINYGSNTATNTLYSGTVAAALEGAIQGITSLAFSLATYEHADFTYAGKFARKLAKKVLQQGIPADTILSVNIPNVPESEIAGVLSTSQGRSRWEENAIERNDMYGNPYYWLNGTLKLLDDSLRQDEYAVRRNYVTVTPLSCDLTNHTFLDSLNQWNLQK.

Asp14, Asp15, Ser45, and Asn101 together coordinate a divalent metal cation.

Belongs to the SurE nucleotidase family. A divalent metal cation serves as cofactor.

The protein localises to the cytoplasm. It catalyses the reaction a ribonucleoside 5'-phosphate + H2O = a ribonucleoside + phosphate. Functionally, nucleotidase that shows phosphatase activity on nucleoside 5'-monophosphates. This is 5'-nucleotidase SurE from Chlorobium limicola (strain DSM 245 / NBRC 103803 / 6330).